The following is a 291-amino-acid chain: Ribonuclease Z (291 aa).

The Zn(2+) site is built by His61, His63, Asp65, His66, His133, Asp201, and His257. The active-site Proton acceptor is the Asp65.

The protein belongs to the RNase Z family. As to quaternary structure, homodimer. Requires Zn(2+) as cofactor.

It carries out the reaction Endonucleolytic cleavage of RNA, removing extra 3' nucleotides from tRNA precursor, generating 3' termini of tRNAs. A 3'-hydroxy group is left at the tRNA terminus and a 5'-phosphoryl group is left at the trailer molecule.. Zinc phosphodiesterase, which displays some tRNA 3'-processing endonuclease activity. Probably involved in tRNA maturation, by removing a 3'-trailer from precursor tRNA. This Saccharolobus solfataricus (strain ATCC 35092 / DSM 1617 / JCM 11322 / P2) (Sulfolobus solfataricus) protein is Ribonuclease Z.